Reading from the N-terminus, the 673-residue chain is RAS guanyl-releasing protein 4 (673 aa).

Composition is skewed to basic residues over residues 1 to 10 (MNRKDSKRKS) and 20 to 32 (GRGR…RHKT). Disordered stretches follow at residues 1–34 (MNRK…KTCP) and 162–188 (QSLG…PGLG). Residues 49–172 (GMLNEGGCSE…SLGDFSSRLS (124 aa)) form the N-terminal Ras-GEF domain. In terms of domain architecture, Ras-GEF spans 201–432 (ETGELAEHLT…YELSYAREPR (232 aa)). The EF-hand domain occupies 466–501 (HVEQLVESVFKNYDPDGRGTISQEDFERLSGNFPFA). The Phorbol-ester/DAG-type zinc finger occupies 540–590 (LHTFQEVTFRKPTFCNSCSGFLWGVTKQGYRCRDCGLCCHRHCRDQVKVEC). Disordered stretches follow at residues 593–618 (RPGA…ASCG) and 638–673 (RHAW…KLNS). Positions 603 to 612 (PEAPVPPTPV) are enriched in pro residues.

Belongs to the RASGRP family.

The protein localises to the cytoplasm. The protein resides in the cell membrane. Functions as a cation- and diacylglycerol (DAG)-regulated nucleotide exchange factor activating Ras through the exchange of bound GDP for GTP. In neutrophils, participates in a phospholipase C-activating N-formyl peptide-activated GPCR (G protein-coupled receptor) signaling pathway by promoting Ras-mediated activation of PIK3CG/PI3Kgamma to promote neutrophil functional responses. In CD117(+) dendritic cells and mast cells, participates in an lipopolysaccharide (LPS)-activated signaling pathway that stimulates the production of interferon-gamma and other pro-inflammatory cytokines by natural killer (NK) cells. May function in mast cell differentiation. Does not appear to be required for the development of B-cells, DC-cells, T-cells, or NK-cells. In Bos taurus (Bovine), this protein is RAS guanyl-releasing protein 4 (RASGRP4).